The primary structure comprises 352 residues: Ferrochelatase (352 aa).

Fe cation is bound by residues H222 and E303.

It belongs to the ferrochelatase family.

Its subcellular location is the cytoplasm. The enzyme catalyses heme b + 2 H(+) = protoporphyrin IX + Fe(2+). Its pathway is porphyrin-containing compound metabolism; protoheme biosynthesis; protoheme from protoporphyrin-IX: step 1/1. Functionally, catalyzes the ferrous insertion into protoporphyrin IX. This Brucella melitensis biotype 2 (strain ATCC 23457) protein is Ferrochelatase.